A 497-amino-acid chain; its full sequence is Cytochrome P450 2D6 (497 aa).

Residue Asp-301 coordinates substrate. Cys-443 contributes to the heme binding site.

The protein belongs to the cytochrome P450 family. The cofactor is heme.

It is found in the endoplasmic reticulum membrane. The protein resides in the microsome membrane. The enzyme catalyses (5Z,8Z,11Z,14Z)-eicosatetraenoate + reduced [NADPH--hemoprotein reductase] + O2 = (8R,9S)-epoxy-(5Z,11Z,14Z)-eicosatrienoate + oxidized [NADPH--hemoprotein reductase] + H2O + H(+). It carries out the reaction (5Z,8Z,11Z,14Z)-eicosatetraenoate + reduced [NADPH--hemoprotein reductase] + O2 = (11R,12S)-epoxy-(5Z,8Z,14Z)-eicosatrienoate + oxidized [NADPH--hemoprotein reductase] + H2O + H(+). The catalysed reaction is (5Z,8Z,11Z,14Z)-eicosatetraenoate + reduced [NADPH--hemoprotein reductase] + O2 = (14S,15R)-epoxy-(5Z,8Z,11Z)-eicosatrienoate + oxidized [NADPH--hemoprotein reductase] + H2O + H(+). It catalyses the reaction N-(5Z,8Z,11Z,14Z-eicosatetraenoyl)-ethanolamine + reduced [NADPH--hemoprotein reductase] + O2 = N-(8,9-epoxy-5Z,11Z,14Z-eicosatrienoyl)-ethanolamine + oxidized [NADPH--hemoprotein reductase] + H2O + H(+). The enzyme catalyses N-(5Z,8Z,11Z,14Z-eicosatetraenoyl)-ethanolamine + reduced [NADPH--hemoprotein reductase] + O2 = N-(11,12-epoxy-5Z,8Z,14Z-eicosatrienoyl)-ethanolamine + oxidized [NADPH--hemoprotein reductase] + H2O + H(+). It carries out the reaction N-(5Z,8Z,11Z,14Z-eicosatetraenoyl)-ethanolamine + reduced [NADPH--hemoprotein reductase] + O2 = N-(14,15-epoxy-5Z,8Z,11Z-eicosatrienoyl)-ethanolamine + oxidized [NADPH--hemoprotein reductase] + H2O + H(+). The catalysed reaction is N-(5Z,8Z,11Z,14Z-eicosatetraenoyl)-ethanolamine + reduced [NADPH--hemoprotein reductase] + O2 = N-(20-hydroxy-5Z,8Z,11Z,14Z-eicosatetraenoyl)-ethanolamine + oxidized [NADPH--hemoprotein reductase] + H2O + H(+). It catalyses the reaction (5Z,8Z,11Z,14Z,17Z)-eicosapentaenoate + reduced [NADPH--hemoprotein reductase] + O2 = (17S,18R)-epoxy-(5Z,8Z,11Z,14Z)-eicosatetraenoate + oxidized [NADPH--hemoprotein reductase] + H2O + H(+). The enzyme catalyses (4Z,7Z,10Z,13Z,16Z,19Z)-docosahexaenoate + reduced [NADPH--hemoprotein reductase] + O2 = (19R,20S)-epoxy-(4Z,7Z,10Z,13Z,16Z)-docosapentaenoate + oxidized [NADPH--hemoprotein reductase] + H2O + H(+). It carries out the reaction (4Z,7Z,10Z,13Z,16Z,19Z)-docosahexaenoate + reduced [NADPH--hemoprotein reductase] + O2 = (19S,20R)-epoxy-(4Z,7Z,10Z,13Z,16Z)-docosapentaenoate + oxidized [NADPH--hemoprotein reductase] + H2O + H(+). The catalysed reaction is cholesterol + reduced [NADPH--hemoprotein reductase] + O2 = 25-hydroxycholesterol + oxidized [NADPH--hemoprotein reductase] + H2O + H(+). It catalyses the reaction all-trans-retinol + reduced [NADPH--hemoprotein reductase] + O2 = all-trans-retinal + oxidized [NADPH--hemoprotein reductase] + 2 H2O + H(+). It functions in the pathway cofactor metabolism; retinol metabolism. Its pathway is lipid metabolism; fatty acid metabolism. The protein operates within steroid metabolism; cholesterol metabolism. A cytochrome P450 monooxygenase involved in the metabolism of fatty acids, steroids and retinoids. Mechanistically, uses molecular oxygen inserting one oxygen atom into a substrate, and reducing the second into a water molecule, with two electrons provided by NADPH via cytochrome P450 reductase (NADPH--hemoprotein reductase). Catalyzes the epoxidation of double bonds of polyunsaturated fatty acids (PUFA). Metabolizes endocannabinoid arachidonoylethanolamide (anandamide) to 20-hydroxyeicosatetraenoic acid ethanolamide (20-HETE-EA) and 8,9-, 11,12-, and 14,15-epoxyeicosatrienoic acid ethanolamides (EpETrE-EAs), potentially modulating endocannabinoid system signaling. Catalyzes the hydroxylation of carbon-hydrogen bonds. Metabolizes cholesterol toward 25-hydroxycholesterol, a physiological regulator of cellular cholesterol homeostasis. Catalyzes the oxidative transformations of all-trans retinol to all-trans retinal, a precursor for the active form all-trans-retinoic acid. Also involved in the oxidative metabolism of drugs such as antiarrhythmics, adrenoceptor antagonists, and tricyclic antidepressants. The polypeptide is Cytochrome P450 2D6 (CYP2D6) (Pan paniscus (Pygmy chimpanzee)).